Consider the following 966-residue polypeptide: SH3 domain-binding protein 4 (966 aa).

The SH3 1 domain maps to 57 to 116 (GAAREVVAIKDCCPSSFTTLKFSKGDRLYVLDSSGAEWWYAHNNTEMGYIPAAYVEPINY). A ZU5 domain is found at 322 to 457 (TNIVCRLDSS…LEPCMYVCVV (136 aa)). The region spanning 657–727 (NNLKFGKLIK…HAKNVLVVGK (71 aa)) is the SH3 2 domain.

Homodimer or homooligomer.

It localises to the membrane. Its subcellular location is the clathrin-coated pit. The protein localises to the cytoplasmic vesicle. It is found in the clathrin-coated vesicle. The protein resides in the nucleus. In terms of biological role, possible role in regulating endocytosis of the transferrin receptor at the plasma membrane. Alternatively, may function as a negative regulator of the amino acid-induced TOR signaling by inhibiting the formation of active Rag GTPase complexes. Preferentially binds inactive Rag GTPase complexes and prevents their interaction with the mTORC1 complex inhibiting its relocalization to lysosomes and its activation. Thereby, may indirectly regulate cell growth, proliferation and autophagy. The sequence is that of SH3 domain-binding protein 4 (sh3bp4) from Seriola quinqueradiata (Five-ray yellowtail).